The primary structure comprises 147 residues: Secreted RxLR effector protein BLN04 (147 aa).

Positions 1-23 are cleaved as a signal peptide; the sequence is MATMRRICFLFVFNLAVATSTQG. A dEER motif is present at residues 58 to 61; sequence SEER. The helical transmembrane segment at 117–137 threads the bilayer; the sequence is VYIYTILFLSIPIILGVAMYI.

The protein belongs to the RxLR effector family. In terms of assembly, interacts with host transcription factor NAC069.

The protein resides in the secreted. Its subcellular location is the host membrane. Its function is as follows. Secreted effector that inhibits stress-induced relocalization of the transcription factor NAC069 to the nucleus, thus affecting its broad role in abiotic and biotic stress responses. The protein is Secreted RxLR effector protein BLN04 of Bremia lactucae (Lettuce downy mildew).